The following is a 454-amino-acid chain: Probable N-octanoylanthranilate hydrolase AqdA2 (454 aa).

The active-site Acyl-ester intermediate is serine 185. Active-site charge relay system residues include glutamate 306 and histidine 379.

Belongs to the type-B carboxylesterase/lipase family.

It catalyses the reaction N-octanoylanthranilate + H2O = anthranilate + octanoate + H(+). In terms of biological role, involved in the degradation of the Pseudomonas aeruginosa quorum sensing signal molecules HHQ (2-heptyl-4-quinolone) and PQS (2-heptyl-3-hydroxy-4-quinolone) to anthranilic acid. Probably catalyzes the hydrolysis of N-octanoylanthranilic acid to anthranilic acid. The chain is Probable N-octanoylanthranilate hydrolase AqdA2 from Rhodococcus erythropolis (Arthrobacter picolinophilus).